The primary structure comprises 142 residues: Conidial pigment biosynthesis dehydratase EthD (142 aa).

The EthD domain maps to 25–121; it reads PGMSEAAYRE…PDHQKFADTS (97 aa).

This sequence belongs to the tpcK family.

It functions in the pathway pigment biosynthesis. Dehydratase; part of the Pks1 gene cluster that mediates the biosynthesis of an anthraquinone derivative pigment that contributes to conidial pigmentation that provides protection from UV radiation, heat and cold stress. The polyketide synthase Pks1 produces 1-acetyl-2,4,6,8-tetrahydroxy-9,10-anthraquinone though condensation of acetyl-CoA with malonyl-CoA. The dehydratase EthD and the laccase Mlac1 further convert the anthraquinone derivative into the final conidial pigment. This is Conidial pigment biosynthesis dehydratase EthD from Metarhizium robertsii (strain ARSEF 23 / ATCC MYA-3075) (Metarhizium anisopliae (strain ARSEF 23)).